A 181-amino-acid chain; its full sequence is TATA-box-binding protein (181 aa).

2 repeat units span residues 7–83 (IVNV…IKEL) and 98–173 (VQNM…LTTL).

The protein belongs to the TBP family.

Its function is as follows. General factor that plays a role in the activation of archaeal genes transcribed by RNA polymerase. Binds specifically to the TATA box promoter element which lies close to the position of transcription initiation. The chain is TATA-box-binding protein from Methanococcus maripaludis (strain C7 / ATCC BAA-1331).